We begin with the raw amino-acid sequence, 430 residues long: Trigger factor (430 aa).

The 86-residue stretch at 164–249 folds into the PPIase FKBP-type domain; sequence DDWAVIDHEG…LKALKTRQLP (86 aa).

It belongs to the FKBP-type PPIase family. Tig subfamily.

It localises to the cytoplasm. It catalyses the reaction [protein]-peptidylproline (omega=180) = [protein]-peptidylproline (omega=0). In terms of biological role, involved in protein export. Acts as a chaperone by maintaining the newly synthesized protein in an open conformation. Functions as a peptidyl-prolyl cis-trans isomerase. The protein is Trigger factor of Anaeromyxobacter sp. (strain Fw109-5).